The primary structure comprises 285 residues: Phosphate import ATP-binding protein PstB (285 aa).

The ABC transporter domain occupies 39–280 (LEVSDLQLWY…PAKKQTEDYI (242 aa)). 71-78 (GPSGCGKS) serves as a coordination point for ATP.

This sequence belongs to the ABC transporter superfamily. Phosphate importer (TC 3.A.1.7) family. As to quaternary structure, the complex is composed of two ATP-binding proteins (PstB), two transmembrane proteins (PstC and PstA) and a solute-binding protein (PstS).

It is found in the cell inner membrane. It carries out the reaction phosphate(out) + ATP + H2O = ADP + 2 phosphate(in) + H(+). In terms of biological role, part of the ABC transporter complex PstSACB involved in phosphate import. Responsible for energy coupling to the transport system. The polypeptide is Phosphate import ATP-binding protein PstB (Alkalilimnicola ehrlichii (strain ATCC BAA-1101 / DSM 17681 / MLHE-1)).